The sequence spans 416 residues: Cell division protein FtsZ (416 aa).

Residues 20 to 24, 107 to 109, glutamate 138, arginine 142, and aspartate 186 contribute to the GTP site; these read GGGVN and GTG. A compositionally biased stretch (polar residues) spans 319–335; it reads QETNANNSSPAQRQAES. Residues 319–416 are disordered; sequence QETNANNSSP…DSLDFPDFLK (98 aa). The span at 376–392 shows a compositional bias: acidic residues; that stretch reads QDDDIPDDAGFDVDLPA. Residues 404–416 show a composition bias toward basic and acidic residues; sequence ARKDSLDFPDFLK.

Belongs to the FtsZ family. Homodimer. Polymerizes to form a dynamic ring structure in a strictly GTP-dependent manner. Interacts directly with several other division proteins.

The protein resides in the cytoplasm. Essential cell division protein that forms a contractile ring structure (Z ring) at the future cell division site. The regulation of the ring assembly controls the timing and the location of cell division. One of the functions of the FtsZ ring is to recruit other cell division proteins to the septum to produce a new cell wall between the dividing cells. Binds GTP and shows GTPase activity. In Kocuria rhizophila (strain ATCC 9341 / DSM 348 / NBRC 103217 / DC2201), this protein is Cell division protein FtsZ.